The following is a 191-amino-acid chain: Uridylate kinase (191 aa).

Position 12–17 (12–17 (GAGKGT)) interacts with ATP. Residues 33 to 63 (SAGDCLREEQNRPGSKYGNLIKEYIKDGKIV) are NMP. A ribonucleoside 5'-phosphate is bound by residues Arg-39, 61–63 (KIV), 91–94 (GFPR), and Gln-98. Residues 128-138 (HRGKTSGRSDD) form an LID region. ATP is bound at residue Arg-129. Arg-135 and Arg-146 together coordinate a ribonucleoside 5'-phosphate. Gln-174 lines the ATP pocket.

This sequence belongs to the adenylate kinase family. UMP-CMP kinase subfamily. As to quaternary structure, monomer. Mg(2+) serves as cofactor.

Its subcellular location is the cytoplasm. It is found in the nucleus. It carries out the reaction UMP + ATP = UDP + ADP. In terms of biological role, catalyzes the phosphorylation of pyrimidine nucleoside monophosphates at the expense of ATP. Plays an important role in de novo pyrimidine nucleotide biosynthesis. Has preference for UMP and dUMP as phosphate acceptors, but can also use CMP, dCMP and AMP. This is Uridylate kinase from Schizosaccharomyces pombe (strain 972 / ATCC 24843) (Fission yeast).